Consider the following 116-residue polypeptide: MYEQAIVIRNDLKMGKGKMAAQACHASIQAFLHAQKISSSAVSGWMNEGQKKVVLKVNSEKELLEIFKNVNIEGLPCSLIRDAGRTQVEPGSLTAVGIGPEKEEKISKVTKDLKLL.

The protein belongs to the PTH2 family.

The protein localises to the cytoplasm. The enzyme catalyses an N-acyl-L-alpha-aminoacyl-tRNA + H2O = an N-acyl-L-amino acid + a tRNA + H(+). In terms of biological role, the natural substrate for this enzyme may be peptidyl-tRNAs which drop off the ribosome during protein synthesis. In Methanococcus maripaludis (strain C7 / ATCC BAA-1331), this protein is Peptidyl-tRNA hydrolase.